Consider the following 27-residue polypeptide: Protamine-A (27 aa).

Residues 1–27 (ARRRRRHASTKLKRRRRRRRHGKKSHK) form a disordered region.

Testis.

It is found in the nucleus. Its subcellular location is the chromosome. Functionally, protamines substitute for histones in the chromatin of sperm during the haploid phase of spermatogenesis. They compact sperm DNA into a highly condensed, stable and inactive complex. The polypeptide is Protamine-A (Acipenser stellatus (Sevruga)).